The chain runs to 286 residues: Putative quercetin 2,3-dioxygenase PA2418 (286 aa).

A divalent metal cation is bound by residues His61, His63, His105, and Glu107.

It belongs to the pirin family. A divalent metal cation serves as cofactor.

The catalysed reaction is quercetin + O2 = 2-(3,4-dihydroxybenzoyloxy)-4,6-dihydroxybenzoate + CO. Its pathway is flavonoid metabolism; quercetin degradation. In terms of biological role, putative quercetin 2,3-dioxygenase. The polypeptide is Putative quercetin 2,3-dioxygenase PA2418 (Pseudomonas aeruginosa (strain ATCC 15692 / DSM 22644 / CIP 104116 / JCM 14847 / LMG 12228 / 1C / PRS 101 / PAO1)).